A 281-amino-acid chain; its full sequence is ATP phosphoribosyltransferase (281 aa).

It belongs to the ATP phosphoribosyltransferase family. Long subfamily. Requires Mg(2+) as cofactor.

The protein localises to the cytoplasm. The catalysed reaction is 1-(5-phospho-beta-D-ribosyl)-ATP + diphosphate = 5-phospho-alpha-D-ribose 1-diphosphate + ATP. It participates in amino-acid biosynthesis; L-histidine biosynthesis; L-histidine from 5-phospho-alpha-D-ribose 1-diphosphate: step 1/9. With respect to regulation, feedback inhibited by histidine. Functionally, catalyzes the condensation of ATP and 5-phosphoribose 1-diphosphate to form N'-(5'-phosphoribosyl)-ATP (PR-ATP). Has a crucial role in the pathway because the rate of histidine biosynthesis seems to be controlled primarily by regulation of HisG enzymatic activity. The polypeptide is ATP phosphoribosyltransferase (Corynebacterium glutamicum (strain R)).